Reading from the N-terminus, the 482-residue chain is MFS-type transporter cnsL (482 aa).

A helical transmembrane segment spans residues 73-93; the sequence is LFVCATLSGLDKTAISAAAVY. Asn-100 carries an N-linked (GlcNAc...) asparagine glycan. 9 consecutive transmembrane segments (helical) span residues 108-128, 131-151, 170-190, 199-219, 304-324, 333-353, 361-381, 392-412, and 426-446; these read WIGS…AYCL, VPAV…EMSV, IILN…VGYY, IIFL…YFVL, LLAM…SYLA, AIVT…YALP, LVGL…VSVY, ITLY…GPQT, and VAMI…GVVC.

It belongs to the major facilitator superfamily. Allantoate permease family.

Its subcellular location is the cell membrane. In terms of biological role, MFS-type transporter; part of the gene cluster that mediates the biosynthesis of communesins, a prominent class of indole alkaloids with great potential as pharmaceuticals. With the MFS transporter cnsO, is most likely responsible for cummunesins secretion and thereby may contribute to intrinsic resistance. This Penicillium expansum (Blue mold rot fungus) protein is MFS-type transporter cnsL.